The following is a 1059-amino-acid chain: Protein OPAQUE10 (1059 aa).

A run of 7 repeats spans residues 269 to 342 (SLLE…KESC), 343 to 416 (SLLE…KESC), 417 to 490 (SPLE…KESC), 491 to 564 (SPLE…KESC), 565 to 638 (FPLE…KESC), 639 to 712 (SPLE…KESC), and 713 to 786 (SPLE…KESC). The interval 269–786 (SLLEPEDSVN…SRPIHDKESC (518 aa)) is 7 X approximate repeats. Positions 511–534 (FNDAPNKESEGYGESGRGKHGEKS) are disordered. Residues 515–534 (PNKESEGYGESGRGKHGEKS) show a composition bias toward basic and acidic residues. 3 disordered regions span residues 732–756 (QYSD…EEKS), 856–875 (ETLA…DTGT), and 889–998 (SVCS…SGKG). The segment covering 858–869 (LADHPKKEEAGL) has biased composition (basic and acidic residues). Composition is skewed to polar residues over residues 907 to 924 (DFSS…NTGG) and 945 to 958 (ASDS…PEAS). The span at 984–994 (TRGRPEGDAPR) shows a compositional bias: basic and acidic residues. A helical membrane pass occupies residues 1003–1023 (VAGGITLVGAVFFMFHLSAAL).

In terms of assembly, homodimer. Interacts (via N-terminus) with FL1 (via C-terminus), HIP, 19 kDa alpha-zein (AC P06677), 22 kDa alpha-zein (AC O48966), 16 kDa gamma-zein (AC P08031) and 50 kDa gamma-zein (AC C0P381). As to expression, expressed in kernels.

The protein localises to the endoplasmic reticulum membrane. In terms of biological role, cereal endosperm protein required for the ring-shaped distribution of 22 kDa alpha- and 16 kDa gamma-zeins in protein bodies. The polypeptide is Protein OPAQUE10 (Zea mays (Maize)).